The chain runs to 535 residues: MDIGVHVLGSVTSNENESLGLKELIGTKQDRSGFIGEDCLQRSLKLARTTTRAEEEENLSSSVAAAYCKTMSFHQGIPLMRSASPLSSDSRRQEQMLSFSDKPDALDFSKYVGLDNSSNNKNSLSPFLHQIPPPSYFRSSGGYGSGGMMMNMSMQGNFTGVKGPFTLTQWAELEQQALIYKYITANVPVPSSLLISIKKSFYPYGSLPPSSFGWGTFHLGFAGGNMDPEPGRCRRTDGKKWRCSRDAVPDQKYCERHINRGRHRSRKPVEVQSGQNQTAAAASKAVTTPQQPVVAGNTNRSNARASSNRSLAIGSQYINPSTESLPNNRGVSIYPSTVNLQPKESPVIHQKHRNNNNPFEFGHISSDSLLNPNTAKTYGSSFLDFSSNQEKHSGNHNHNSWPEELTSDWTQLSMSIPIASSSPSSTHNNNNAQEKTTLSPLRLSRELDLSIQTDETTIEPTVKKVNTWIPISWGNSLGGPLGEVLNSTTNSPTFGSSPTGVLQKSTFCSLSNNSSVSSPIAENNRHNGDYFHYTT.

Residues 164 to 199 (PFTLTQWAELEQQALIYKYITANVPVPSSLLISIKK) enclose the QLQ domain. The WRC domain maps to 227 to 271 (DPEPGRCRRTDGKKWRCSRDAVPDQKYCERHINRGRHRSRKPVEV). 2 short sequence motifs (bipartite nuclear localization signal) span residues 232–242 (RCRRTDGKKWR) and 260–267 (RGRHRSRK). 3 disordered regions span residues 260–308 (RGRH…ASSN), 417–437 (PIAS…EKTT), and 514–535 (SSVS…HYTT). A compositionally biased stretch (polar residues) spans 272–291 (QSGQNQTAAAASKAVTTPQQ). The span at 299 to 308 (NRSNARASSN) shows a compositional bias: low complexity. Residues 426–437 (THNNNNAQEKTT) show a composition bias toward polar residues.

This sequence belongs to the GRF family. In terms of assembly, interacts with GIF1. Strongly expressed in actively growing and developing tissues, such as roots, upper stems, and shoot tips containing the shoot apical meristem (SAM) and flower buds. Detected in young leaf primordium. Also expressed in mature flowers, but weakly expressed in mature stems and leaves.

The protein resides in the nucleus. Its function is as follows. Transcription activator that plays a role in the regulation of cell expansion in leaf and cotyledons tissues. Component of a network formed by miR396, the GRFs and their interacting factors (GIFs) acting in the regulation of meristem function, at least partially through the control of cell proliferation. The chain is Growth-regulating factor 2 (GRF2) from Arabidopsis thaliana (Mouse-ear cress).